The sequence spans 330 residues: Stimulated by retinoic acid gene 8 protein homolog (330 aa).

Positions Arg-50 to Arg-55 match the Nuclear localization signal (NLS) motif. The stretch at Gln-88–Ala-112 forms a coiled coil.

As to quaternary structure, interacts with XPO1. Interacts with MEIOSIN. In terms of processing, phosphorylated. In terms of tissue distribution, expressed specifically in testis and fetal ovaries.

It localises to the cytoplasm. The protein localises to the nucleus. In terms of biological role, meiosis-inducer required for the transition into meiosis for both female and male germ cells. In female germ cells, acts downstream of ZGLP1 as a key effector of the meiotic program: required for premeiotic DNA replication and subsequent events in meiotic prophase. During spermatogenesis, next to its role in meiotic initiation, promotes (but is not required for) spermatogonial differentiation. In complex with MEIOSIN, directly activates the transcription of a subset of critical meiotic genes playing a central role in cell-cycle switching from mitosis to meiosis. The protein is Stimulated by retinoic acid gene 8 protein homolog of Homo sapiens (Human).